The following is a 414-amino-acid chain: Esterase FrsA (414 aa).

It belongs to the FrsA family.

It carries out the reaction a carboxylic ester + H2O = an alcohol + a carboxylate + H(+). In terms of biological role, catalyzes the hydrolysis of esters. The polypeptide is Esterase FrsA (Salmonella agona (strain SL483)).